We begin with the raw amino-acid sequence, 586 residues long: Maltogenic alpha-amylase (586 aa).

5 residues coordinate Ca(2+): N147, N152, D153, G172, and D174. 2 residues coordinate substrate: H247 and R326. Catalysis depends on D328, which acts as the Nucleophile. Residue E357 is the Proton donor of the active site. Substrate contacts are provided by residues 423–424, D468, and R472; that span reads HD.

Belongs to the glycosyl hydrolase 13 family. The cofactor is Ca(2+).

It catalyses the reaction hydrolysis of (1-&gt;4)-alpha-D-glucosidic linkages in polysaccharides so as to remove successive alpha-maltose residues from the non-reducing ends of the chains.. Functionally, converts starch into maltose. The chain is Maltogenic alpha-amylase from Bacillus acidopullulyticus.